The chain runs to 354 residues: Large ribosomal subunit protein uL10 (354 aa).

Acidic residues-rich tracts occupy residues 286 to 296 (DEEALPEELQD) and 307 to 345 (AEADDEDDTGNVEQTDESDADDADDADDADDADEEDGDG). Residues 286 to 354 (DEEALPEELQ…GGDALGDMFG (69 aa)) form a disordered region.

Belongs to the universal ribosomal protein uL10 family. Part of the 50S ribosomal subunit. Forms part of the ribosomal stalk which helps the ribosome interact with GTP-bound translation factors. Forms a heptameric L10(L12)2(L12)2(L12)2 complex, where L10 forms an elongated spine to which the L12 dimers bind in a sequential fashion.

Forms part of the ribosomal stalk, playing a central role in the interaction of the ribosome with GTP-bound translation factors. This Natronomonas pharaonis (strain ATCC 35678 / DSM 2160 / CIP 103997 / JCM 8858 / NBRC 14720 / NCIMB 2260 / Gabara) (Halobacterium pharaonis) protein is Large ribosomal subunit protein uL10.